The sequence spans 105 residues: UPF0235 protein Mext_2130 (105 aa).

The protein belongs to the UPF0235 family.

This Methylorubrum extorquens (strain PA1) (Methylobacterium extorquens) protein is UPF0235 protein Mext_2130.